The chain runs to 95 residues: Small ribosomal subunit protein bS6 (95 aa).

It belongs to the bacterial ribosomal protein bS6 family.

In terms of biological role, binds together with bS18 to 16S ribosomal RNA. This Clostridium beijerinckii (strain ATCC 51743 / NCIMB 8052) (Clostridium acetobutylicum) protein is Small ribosomal subunit protein bS6.